Reading from the N-terminus, the 123-residue chain is Small ribosomal subunit protein uS12 (123 aa).

A 3-methylthioaspartic acid modification is found at Asp89.

This sequence belongs to the universal ribosomal protein uS12 family. As to quaternary structure, part of the 30S ribosomal subunit. Contacts proteins S8 and S17. May interact with IF1 in the 30S initiation complex.

In terms of biological role, with S4 and S5 plays an important role in translational accuracy. Its function is as follows. Interacts with and stabilizes bases of the 16S rRNA that are involved in tRNA selection in the A site and with the mRNA backbone. Located at the interface of the 30S and 50S subunits, it traverses the body of the 30S subunit contacting proteins on the other side and probably holding the rRNA structure together. The combined cluster of proteins S8, S12 and S17 appears to hold together the shoulder and platform of the 30S subunit. The sequence is that of Small ribosomal subunit protein uS12 from Anaeromyxobacter sp. (strain Fw109-5).